Consider the following 287-residue polypeptide: Phosphoribosylaminoimidazole-succinocarboxamide synthase (287 aa).

This sequence belongs to the SAICAR synthetase family.

The enzyme catalyses 5-amino-1-(5-phospho-D-ribosyl)imidazole-4-carboxylate + L-aspartate + ATP = (2S)-2-[5-amino-1-(5-phospho-beta-D-ribosyl)imidazole-4-carboxamido]succinate + ADP + phosphate + 2 H(+). The protein operates within purine metabolism; IMP biosynthesis via de novo pathway; 5-amino-1-(5-phospho-D-ribosyl)imidazole-4-carboxamide from 5-amino-1-(5-phospho-D-ribosyl)imidazole-4-carboxylate: step 1/2. The chain is Phosphoribosylaminoimidazole-succinocarboxamide synthase from Neisseria meningitidis serogroup A / serotype 4A (strain DSM 15465 / Z2491).